We begin with the raw amino-acid sequence, 338 residues long: Ketol-acid reductoisomerase (NADP(+)) (338 aa).

Positions 1–181 (MKVFYDKDCD…GGGRAGIIET (181 aa)) constitute a KARI N-terminal Rossmann domain. NADP(+) contacts are provided by residues 24-27 (YGSQ), arginine 47, and serine 52. The active site involves histidine 107. Glycine 133 is an NADP(+) binding site. Residues 182–327 (NFREETETDL…AKLRAMMPWI (146 aa)) form the KARI C-terminal knotted domain. Mg(2+) is bound by residues aspartate 190, glutamate 194, glutamate 226, and glutamate 230. A substrate-binding site is contributed by serine 251.

It belongs to the ketol-acid reductoisomerase family. The cofactor is Mg(2+).

The catalysed reaction is (2R)-2,3-dihydroxy-3-methylbutanoate + NADP(+) = (2S)-2-acetolactate + NADPH + H(+). It carries out the reaction (2R,3R)-2,3-dihydroxy-3-methylpentanoate + NADP(+) = (S)-2-ethyl-2-hydroxy-3-oxobutanoate + NADPH + H(+). It functions in the pathway amino-acid biosynthesis; L-isoleucine biosynthesis; L-isoleucine from 2-oxobutanoate: step 2/4. The protein operates within amino-acid biosynthesis; L-valine biosynthesis; L-valine from pyruvate: step 2/4. In terms of biological role, involved in the biosynthesis of branched-chain amino acids (BCAA). Catalyzes an alkyl-migration followed by a ketol-acid reduction of (S)-2-acetolactate (S2AL) to yield (R)-2,3-dihydroxy-isovalerate. In the isomerase reaction, S2AL is rearranged via a Mg-dependent methyl migration to produce 3-hydroxy-3-methyl-2-ketobutyrate (HMKB). In the reductase reaction, this 2-ketoacid undergoes a metal-dependent reduction by NADPH to yield (R)-2,3-dihydroxy-isovalerate. This is Ketol-acid reductoisomerase (NADP(+)) from Herminiimonas arsenicoxydans.